Reading from the N-terminus, the 188-residue chain is Phospholipase A2 inhibitor 31 kDa subunit (188 aa).

Intrachain disulfides connect cysteine 3–cysteine 27, cysteine 6–cysteine 13, cysteine 20–cysteine 48, cysteine 54–cysteine 75, cysteine 76–cysteine 81, cysteine 99–cysteine 124, cysteine 117–cysteine 146, and cysteine 150–cysteine 172. N-linked (GlcNAc...) asparagine glycosylation occurs at asparagine 157.

Belongs to the CNF-like-inhibitor family. Heterodimer with phospholipase A2 inhibitor 25 kDa. N-glycosylated. In terms of tissue distribution, expressed by the liver.

It localises to the secreted. Functionally, inhibits the enzymatic activity of phospholipase A2. The protein is Phospholipase A2 inhibitor 31 kDa subunit of Naja kaouthia (Monocled cobra).